A 1896-amino-acid chain; its full sequence is Trinucleotide repeat-containing gene 6A protein (1896 aa).

2 stretches are compositionally biased toward basic and acidic residues: residues Met-1–Val-21 and Lys-39–Glu-57. Disordered stretches follow at residues Met-1 to Arg-137, Ser-159 to Thr-209, Glu-222 to Glu-250, and Ala-257 to Ser-276. Residues Met-1–Leu-917 are interaction with argonaute family proteins. Composition is skewed to low complexity over residues Ala-69–Gln-93 and Gln-101–Gln-113. Residues Arg-125–Arg-137 are compositionally biased toward basic residues. Residues Ile-239 to Ser-488 form a sufficient for interaction with AGO1, AGO3 and AGO4 region. Sufficient for interaction with AGO2 regions lie at residues Val-255–Gly-331, Gly-303–Gly-384, Asn-325–Phe-424, Ser-394–Ala-480, and Thr-487–Glu-736. Composition is skewed to polar residues over residues Val-396–Glu-410 and Ser-417–Gln-429. Disordered regions lie at residues Val-396–Pro-461, Phe-548–Ile-683, Leu-703–Lys-998, Ile-1011–Trp-1126, and Gln-1143–Glu-1182. Residues Asn-430–Asn-443 are compositionally biased toward low complexity. Residues Phe-444–Pro-461 are compositionally biased toward polar residues. Positions Asn-551 to Gln-1279 are sufficient for interaction with AGO1 and AGO4. The segment covering Ser-573–Arg-584 has biased composition (gly residues). 2 stretches are compositionally biased toward polar residues: residues Gln-591–Gly-617 and Gly-635–Val-647. Basic and acidic residues predominate over residues Gly-665–Ile-683. Positions Leu-703 to Glu-722 are enriched in polar residues. A compositionally biased stretch (basic and acidic residues) spans Thr-723 to Asn-733. Position 724 is a phosphoserine (Ser-724). Residues Trp-738 to Ser-766 are compositionally biased toward polar residues. Residues Ser-858–Gly-871 show a composition bias toward low complexity. Phosphoserine is present on Ser-863. Composition is skewed to polar residues over residues Gly-876–Gly-906 and Lys-924–Ile-937. Ser-976 is modified (phosphoserine). Composition is skewed to polar residues over residues Ala-1033–Gly-1042, Thr-1054–Ser-1064, and Ala-1082–Lys-1105. Positions Val-1059–Glu-1129 are sufficient for interaction with AGO2. Low complexity predominate over residues Gln-1143–Leu-1163. Residues Ser-1197 and Ser-1255 each carry the phosphoserine modification. 3 disordered regions span residues Gly-1234 to Met-1256, Val-1273 to Leu-1306, and Gln-1360 to Gln-1395. Composition is skewed to low complexity over residues Gln-1284–Pro-1296 and Gln-1360–Gln-1376. The residue at position 1406 (Thr-1406) is a Phosphothreonine. 2 disordered regions span residues Met-1512–Gly-1570 and Pro-1659–Ser-1685. Ser-1520 bears the Phosphoserine mark. The interval Thr-1605–Met-1896 is sufficient for interaction with AGO2. An RRM domain is found at Asn-1716 to Glu-1788. Ser-1804 and Ser-1825 each carry phosphoserine.

This sequence belongs to the GW182 family. As to quaternary structure, interacts with AGO2. Interacts with AGO1, AGO3 and AGO4. Interacts with CNOT1; the interaction is direct and mediates the association with the CCR4-NOT complex. Interacts with ZC3H12A. Interacts with SND1. Interacts with GARRE1.

The protein localises to the cytoplasm. The protein resides in the P-body. Functionally, plays a role in RNA-mediated gene silencing by both micro-RNAs (miRNAs) and short interfering RNAs (siRNAs). Required for miRNA-dependent repression of translation and for siRNA-dependent endonucleolytic cleavage of complementary mRNAs by argonaute family proteins. As a scaffolding protein, associates with argonaute proteins bound to partially complementary mRNAs, and can simultaneously recruit CCR4-NOT and PAN deadenylase complexes. The chain is Trinucleotide repeat-containing gene 6A protein (Tnrc6a) from Mus musculus (Mouse).